The primary structure comprises 120 residues: NAD(P)H-quinone oxidoreductase subunit 3, chloroplastic (120 aa).

3 helical membrane-spanning segments follow: residues 9 to 29, 64 to 84, and 88 to 108; these read IFWA…LISG, MFAL…PWAM, and VLGV…IVGS.

Belongs to the complex I subunit 3 family. As to quaternary structure, NDH is composed of at least 16 different subunits, 5 of which are encoded in the nucleus.

The protein localises to the plastid. The protein resides in the chloroplast thylakoid membrane. It catalyses the reaction a plastoquinone + NADH + (n+1) H(+)(in) = a plastoquinol + NAD(+) + n H(+)(out). It carries out the reaction a plastoquinone + NADPH + (n+1) H(+)(in) = a plastoquinol + NADP(+) + n H(+)(out). Functionally, NDH shuttles electrons from NAD(P)H:plastoquinone, via FMN and iron-sulfur (Fe-S) centers, to quinones in the photosynthetic chain and possibly in a chloroplast respiratory chain. The immediate electron acceptor for the enzyme in this species is believed to be plastoquinone. Couples the redox reaction to proton translocation, and thus conserves the redox energy in a proton gradient. The chain is NAD(P)H-quinone oxidoreductase subunit 3, chloroplastic from Phaseolus vulgaris (Kidney bean).